The primary structure comprises 442 residues: tRNA(Ile)-lysidine synthase (442 aa).

28–33 contacts ATP; that stretch reads SGGLDS.

This sequence belongs to the tRNA(Ile)-lysidine synthase family.

The protein resides in the cytoplasm. The catalysed reaction is cytidine(34) in tRNA(Ile2) + L-lysine + ATP = lysidine(34) in tRNA(Ile2) + AMP + diphosphate + H(+). Its function is as follows. Ligates lysine onto the cytidine present at position 34 of the AUA codon-specific tRNA(Ile) that contains the anticodon CAU, in an ATP-dependent manner. Cytidine is converted to lysidine, thus changing the amino acid specificity of the tRNA from methionine to isoleucine. The polypeptide is tRNA(Ile)-lysidine synthase (Pseudomonas aeruginosa (strain ATCC 15692 / DSM 22644 / CIP 104116 / JCM 14847 / LMG 12228 / 1C / PRS 101 / PAO1)).